The sequence spans 185 residues: Elongation factor P (185 aa).

This sequence belongs to the elongation factor P family.

The protein resides in the cytoplasm. The protein operates within protein biosynthesis; polypeptide chain elongation. Functionally, involved in peptide bond synthesis. Stimulates efficient translation and peptide-bond synthesis on native or reconstituted 70S ribosomes in vitro. Probably functions indirectly by altering the affinity of the ribosome for aminoacyl-tRNA, thus increasing their reactivity as acceptors for peptidyl transferase. The sequence is that of Elongation factor P from Dictyoglomus turgidum (strain DSM 6724 / Z-1310).